Reading from the N-terminus, the 282-residue chain is Undecaprenyl-diphosphatase (282 aa).

Transmembrane regions (helical) follow at residues 96-116, 123-143, 198-218, 229-249, and 260-280; these read WMVI…KDII, MWIT…AEKW, FLLA…DAFA, QLAV…AWLL, and FAAY…TGML.

This sequence belongs to the UppP family.

It is found in the cell membrane. The catalysed reaction is di-trans,octa-cis-undecaprenyl diphosphate + H2O = di-trans,octa-cis-undecaprenyl phosphate + phosphate + H(+). Catalyzes the dephosphorylation of undecaprenyl diphosphate (UPP). Confers resistance to bacitracin. This Corynebacterium diphtheriae (strain ATCC 700971 / NCTC 13129 / Biotype gravis) protein is Undecaprenyl-diphosphatase.